Here is a 175-residue protein sequence, read N- to C-terminus: uncharacterized protein (175 aa).

The span at 35-56 (LIENSNYDNNNINNNNNNNNTD) shows a compositional bias: low complexity. The segment at 35–70 (LIENSNYDNNNINNNNNNNNTDNDNDNNNDNEPFYN) is disordered. A run of 2 helical transmembrane segments spans residues 106 to 126 (ILSFSIKSFLLLILYILFFNY) and 132 to 152 (YFIILLSLNLIITLISIKSIF).

It localises to the membrane. This is an uncharacterized protein from Dictyostelium discoideum (Social amoeba).